The primary structure comprises 460 residues: MKGKIVAIIGPVVDVSFMDELPNINDALEVRLSETETRTLEVASHLGNHMVRTISLEATDGLARGMEVIGTLSPIKVPVGKKVLGRMLNVLGKPMDGLDEVDTKRYMPIHKLPPDFHDLGGETEILETGIKVIDLIAPYIKGGKIGLFGGAGVGKTVLIQEMIHNVAKNHGGISVFTGVGERVREGHELYHEMKDSGVLDKTALVFGQMNEPPGARLRVALTGLTLAEYFRDGEKQNVLLFIDNIYRYIQAGSEISALLGRMPSAVGYQPTLATEMGKLQERITSTRYGSITSIQAVYVPADDYTDPAPATVFSHLDATTALSRKLTEDGIYPAIDPLGSTSRALTPSVVGQEHYDTAREVQRMLQRYHELLDIIAILGMDELSDDDKLVVHRARRIQNFLSQNMHVAERFTGQTGSFVPIRETIRGFKEILQGKHDDLPEEAFLLVGTIDDAIAKAKKL.

An ATP-binding site is contributed by 149 to 156 (GGAGVGKT).

This sequence belongs to the ATPase alpha/beta chains family. F-type ATPases have 2 components, CF(1) - the catalytic core - and CF(0) - the membrane proton channel. CF(1) has five subunits: alpha(3), beta(3), gamma(1), delta(1), epsilon(1). CF(0) has three main subunits: a(1), b(2) and c(9-12). The alpha and beta chains form an alternating ring which encloses part of the gamma chain. CF(1) is attached to CF(0) by a central stalk formed by the gamma and epsilon chains, while a peripheral stalk is formed by the delta and b chains.

Its subcellular location is the cell membrane. It catalyses the reaction ATP + H2O + 4 H(+)(in) = ADP + phosphate + 5 H(+)(out). In terms of biological role, produces ATP from ADP in the presence of a proton gradient across the membrane. The catalytic sites are hosted primarily by the beta subunits. The chain is ATP synthase subunit beta from Acholeplasma laidlawii (strain PG-8A).